A 103-amino-acid chain; its full sequence is Cyanovirin-N homolog (103 aa).

The protein belongs to the cyanovirin-N family.

In terms of biological role, mannose-binding lectin. This chain is Cyanovirin-N homolog, found in Tuber borchii (White truffle).